A 1004-amino-acid chain; its full sequence is Kinesin-like protein KIN-7I (1004 aa).

Residues 6–326 (KILVSVRVRP…LLFATCAKEV (321 aa)) enclose the Kinesin motor domain. 89–96 (GQTSSGKT) provides a ligand contact to ATP. Coiled-coil stretches lie at residues 335–402 (VVSE…AQSR), 517–576 (KKEY…QKQS), and 634–661 (SVEK…DQSE). Disordered stretches follow at residues 567-599 (EQSV…KSLP), 628-671 (SQQT…PEDE), and 802-830 (TMQH…GEKT). Basic and acidic residues-rich tracts occupy residues 569–582 (SVEK…KEEM) and 634–652 (SVEK…EDLK). Residues 653–663 (QNLSMDQSEQL) are compositionally biased toward polar residues. Lys-881 participates in a covalent cross-link: Glycyl lysine isopeptide (Lys-Gly) (interchain with G-Cter in ubiquitin).

Belongs to the TRAFAC class myosin-kinesin ATPase superfamily. Kinesin family. KIN-7 subfamily.

The sequence is that of Kinesin-like protein KIN-7I from Arabidopsis thaliana (Mouse-ear cress).